Here is a 500-residue protein sequence, read N- to C-terminus: L-arabinose isomerase (500 aa).

Positions 306, 333, 349, and 448 each coordinate Mn(2+).

The protein belongs to the arabinose isomerase family. Mn(2+) serves as cofactor.

The enzyme catalyses beta-L-arabinopyranose = L-ribulose. Its pathway is carbohydrate degradation; L-arabinose degradation via L-ribulose; D-xylulose 5-phosphate from L-arabinose (bacterial route): step 1/3. In terms of biological role, catalyzes the conversion of L-arabinose to L-ribulose. The protein is L-arabinose isomerase of Cellvibrio japonicus (strain Ueda107) (Pseudomonas fluorescens subsp. cellulosa).